Consider the following 187-residue polypeptide: Crossover junction endodeoxyribonuclease RuvC (187 aa).

Catalysis depends on residues Asp7, Glu67, and Asp140. Mg(2+)-binding residues include Asp7, Glu67, and Asp140.

The protein belongs to the RuvC family. Homodimer which binds Holliday junction (HJ) DNA. The HJ becomes 2-fold symmetrical on binding to RuvC with unstacked arms; it has a different conformation from HJ DNA in complex with RuvA. In the full resolvosome a probable DNA-RuvA(4)-RuvB(12)-RuvC(2) complex forms which resolves the HJ. The cofactor is Mg(2+).

The protein resides in the cytoplasm. The enzyme catalyses Endonucleolytic cleavage at a junction such as a reciprocal single-stranded crossover between two homologous DNA duplexes (Holliday junction).. Its function is as follows. The RuvA-RuvB-RuvC complex processes Holliday junction (HJ) DNA during genetic recombination and DNA repair. Endonuclease that resolves HJ intermediates. Cleaves cruciform DNA by making single-stranded nicks across the HJ at symmetrical positions within the homologous arms, yielding a 5'-phosphate and a 3'-hydroxyl group; requires a central core of homology in the junction. The consensus cleavage sequence is 5'-(A/T)TT(C/G)-3'. Cleavage occurs on the 3'-side of the TT dinucleotide at the point of strand exchange. HJ branch migration catalyzed by RuvA-RuvB allows RuvC to scan DNA until it finds its consensus sequence, where it cleaves and resolves the cruciform DNA. This chain is Crossover junction endodeoxyribonuclease RuvC, found in Chlorobium phaeobacteroides (strain DSM 266 / SMG 266 / 2430).